Here is a 294-residue protein sequence, read N- to C-terminus: Bifunctional protein FolD (294 aa).

Residues 175–177 and Ile-241 each bind NADP(+); that span reads GAS.

This sequence belongs to the tetrahydrofolate dehydrogenase/cyclohydrolase family. Homodimer.

It carries out the reaction (6R)-5,10-methylene-5,6,7,8-tetrahydrofolate + NADP(+) = (6R)-5,10-methenyltetrahydrofolate + NADPH. It catalyses the reaction (6R)-5,10-methenyltetrahydrofolate + H2O = (6R)-10-formyltetrahydrofolate + H(+). Its pathway is one-carbon metabolism; tetrahydrofolate interconversion. Functionally, catalyzes the oxidation of 5,10-methylenetetrahydrofolate to 5,10-methenyltetrahydrofolate and then the hydrolysis of 5,10-methenyltetrahydrofolate to 10-formyltetrahydrofolate. The chain is Bifunctional protein FolD from Hahella chejuensis (strain KCTC 2396).